Reading from the N-terminus, the 418-residue chain is Pentatricopeptide repeat-containing protein At2g18520, mitochondrial (418 aa).

The N-terminal 14 residues, 1–14 (MTSSRLYLRFLRRF), are a transit peptide targeting the mitochondrion. PPR repeat units follow at residues 101–135 (TETF…GTPR), 136–166 (TVVS…FPQR), 173–207 (DKIS…GVEV), 208–242 (TIIA…GCDL), 243–276 (DNTV…GLKP), 277–311 (DTVS…NAAT), 312–342 (FRTL…HKIP), and 343–373 (DFKT…VKKK).

It belongs to the PPR family. P subfamily.

It localises to the mitochondrion. In Arabidopsis thaliana (Mouse-ear cress), this protein is Pentatricopeptide repeat-containing protein At2g18520, mitochondrial.